The chain runs to 425 residues: Serine hydroxymethyltransferase (425 aa).

132-134 (GHL) is a binding site for (6S)-5,6,7,8-tetrahydrofolate. Lys-237 is modified (N6-(pyridoxal phosphate)lysine).

It belongs to the SHMT family. Homodimer. Pyridoxal 5'-phosphate is required as a cofactor.

It is found in the cytoplasm. The catalysed reaction is (6R)-5,10-methylene-5,6,7,8-tetrahydrofolate + glycine + H2O = (6S)-5,6,7,8-tetrahydrofolate + L-serine. The protein operates within one-carbon metabolism; tetrahydrofolate interconversion. It functions in the pathway amino-acid biosynthesis; glycine biosynthesis; glycine from L-serine: step 1/1. In terms of biological role, catalyzes the reversible interconversion of serine and glycine with tetrahydrofolate (THF) serving as the one-carbon carrier. This reaction serves as the major source of one-carbon groups required for the biosynthesis of purines, thymidylate, methionine, and other important biomolecules. Also exhibits THF-independent aldolase activity toward beta-hydroxyamino acids, producing glycine and aldehydes, via a retro-aldol mechanism. This chain is Serine hydroxymethyltransferase, found in Wolbachia sp. subsp. Brugia malayi (strain TRS).